The sequence spans 275 residues: Shikimate dehydrogenase (NADP(+)) (275 aa).

Shikimate-binding positions include 16-18 (SKS) and Thr-63. Lys-67 serves as the catalytic Proton acceptor. Positions 88 and 104 each coordinate shikimate. NADP(+) contacts are provided by residues 129–133 (GAGGA), 153–158 (NRTVAR), and Met-219. Residue Tyr-221 coordinates shikimate. An NADP(+)-binding site is contributed by Gly-243.

Belongs to the shikimate dehydrogenase family. In terms of assembly, homodimer.

The enzyme catalyses shikimate + NADP(+) = 3-dehydroshikimate + NADPH + H(+). The protein operates within metabolic intermediate biosynthesis; chorismate biosynthesis; chorismate from D-erythrose 4-phosphate and phosphoenolpyruvate: step 4/7. Involved in the biosynthesis of the chorismate, which leads to the biosynthesis of aromatic amino acids. Catalyzes the reversible NADPH linked reduction of 3-dehydroshikimate (DHSA) to yield shikimate (SA). The protein is Shikimate dehydrogenase (NADP(+)) of Marinobacter nauticus (strain ATCC 700491 / DSM 11845 / VT8) (Marinobacter aquaeolei).